The chain runs to 436 residues: MAPPKLHTLFCLSGFLALVHPFDWRDLDPVTYIQSSVWIQRIQSELLITSFGHTTIPKGNGPYSVGCTDLMSGYTNQSSFLRLYYPSQDNDFPDALWIPNEEYFQGLTETLGASSFLGKLLKLLYGSVKVPAKWNSPLKTGEKYPLIIFSHGLGAFRSIYSAIGIELASHGFIVAAVEHRDESAAATYYFQDAPAAESGNRSWIYYKVGNLETEERKRQLRQRGEECSQALSWLLSIDEGEPVKNVLDLNFDIQQLKGSLDRSKVAIIGHSFGGATVIQTLSEDQRFRCGIALDPWMFPVGEDVHSKIPQPLFFINSEYFQSANDTKKIEKFYQPQKERKMIAVKGSVHHNFVDFTFATGKIIGQMLSLKGKIDSEVAMDLINKASLAFLQKYLGLDKNFDQWNSLMEGDDENLIPEFTIPTTMQSSTGTEQRNPD.

Residues Met-1 to Pro-21 form the signal peptide. N-linked (GlcNAc...) asparagine glycans are attached at residues Asn-76 and Asn-200. Ser-271 acts as the Nucleophile in catalysis. Catalysis depends on Asp-294, which acts as the Charge relay system. N-linked (GlcNAc...) asparagine glycosylation is present at Asn-324. Residue His-349 is the Charge relay system of the active site.

The protein belongs to the AB hydrolase superfamily. Lipase family. In terms of processing, N-glycosylated. In terms of tissue distribution, plasma.

It localises to the secreted. The protein localises to the extracellular space. It carries out the reaction a 1-O-alkyl-2-acetyl-sn-glycero-3-phosphocholine + H2O = a 1-O-alkyl-sn-glycero-3-phosphocholine + acetate + H(+). The catalysed reaction is 1-O-decyl-2-acetyl-sn-glycero-3-phosphocholine + H2O = 1-O-decyl-sn-glycero-3-phosphocholine + acetate + H(+). It catalyses the reaction 1-O-dodecyl-2-acetyl-sn-glycero-3-phosphocholine + H2O = 1-O-dodecyl-sn-glycero-3-phosphocholine + acetate + H(+). The enzyme catalyses 1-O-tetradecyl-2-acetyl-sn-glycero-3-phosphocholine + H2O = 1-O-tetradecyl-sn-glycero-3-phosphocholine + acetate + H(+). It carries out the reaction 1-O-hexadecyl-2-acetyl-sn-glycero-3-phosphocholine + H2O = 1-O-hexadecyl-sn-glycero-3-phosphocholine + acetate + H(+). The catalysed reaction is 1-O-octadecyl-2-acetyl-sn-glycero-3-phosphocholine + H2O = 1-O-octadecyl-sn-glycero-3-phosphocholine + acetate + H(+). It catalyses the reaction 1-hexadecanoyl-2-acetyl-sn-glycero-3-phosphocholine + H2O = 1-hexadecanoyl-sn-glycero-3-phosphocholine + acetate + H(+). The enzyme catalyses 1-hexadecanoyl-2-propionyl-sn-glycero-3-phosphocholine + H2O = propanoate + 1-hexadecanoyl-sn-glycero-3-phosphocholine + H(+). It carries out the reaction 1-hexadecanoyl-2-butanoyl-sn-glycero-3-phosphocholine + H2O = butanoate + 1-hexadecanoyl-sn-glycero-3-phosphocholine + H(+). The catalysed reaction is 1-hexadecanoyl-2-pentanoyl-sn-glycero-3-phosphocholine + H2O = pentanoate + 1-hexadecanoyl-sn-glycero-3-phosphocholine + H(+). It catalyses the reaction 1-hexadecanoyl-2-glutaroyl-sn-glycero-3-phosphocholine + H2O = glutarate + 1-hexadecanoyl-sn-glycero-3-phosphocholine + H(+). The enzyme catalyses 1-hexadecanoyl-2-(5-oxopentanoyl)-sn-glycero-3-phosphocholine + H2O = 5-oxopentanoate + 1-hexadecanoyl-sn-glycero-3-phosphocholine + H(+). It carries out the reaction 1-hexadecanoyl-2-(9-oxononanoyl)-sn-glycero-3-phosphocholine + H2O = 9-oxononanoate + 1-hexadecanoyl-sn-glycero-3-phosphocholine + H(+). The catalysed reaction is 1-hexadecanoyl-2-[9-hydroperoxy-(10E-octadecenoyl)]-sn-glycero-3-phosphocholine + H2O = 9-hydroperoxy-10E-octadecenoate + 1-hexadecanoyl-sn-glycero-3-phosphocholine + H(+). It catalyses the reaction 1-hexadecanoyl-2-(10-hydroperoxy-8E-octadecenoyl)-sn-glycero-3-phosphocholine + H2O = 10-hydroperoxy-(8E)-octadecenoate + 1-hexadecanoyl-sn-glycero-3-phosphocholine + H(+). In terms of biological role, lipoprotein-associated calcium-independent phospholipase A2 involved in phospholipid catabolism during inflammatory and oxidative stress response. At the lipid-aqueous interface, hydrolyzes the ester bond of fatty acyl group attached at sn-2 position of phospholipids (phospholipase A2 activity). Specifically targets phospholipids with a short-chain fatty acyl group at sn-2 position. Can hydrolyze phospholipids with long fatty acyl chains, only if they carry oxidized functional groups. Hydrolyzes and inactivates platelet-activating factor (PAF, 1-O-alkyl-2-acetyl-sn-glycero-3-phosphocholine), a potent pro-inflammatory signaling lipid that acts through PTAFR on various innate immune cells. Hydrolyzes oxidatively truncated phospholipids carrying an aldehyde group at omega position, preventing their accumulation in lipoprotein particles and uncontrolled pro-inflammatory effects. As part of high-density lipoprotein (HDL) particles, can hydrolyze phospholipids having long-chain fatty acyl hydroperoxides at sn-2 position and protect against potential accumulation of these oxylipins in the vascular wall. Catalyzes the release from membrane phospholipids of F2-isoprostanes, lipid biomarkers of cellular oxidative damage. This chain is Platelet-activating factor acetylhydrolase (PLA2G7), found in Cavia porcellus (Guinea pig).